The chain runs to 28 residues: MAPRGFSCLLLSTSEIDLPVKRLLSSVF.

Belongs to the humanin family. Highly expressed in testis. Also expressed in kidney, heart, skeletal muscles and brain.

The protein resides in the secreted. It localises to the cytoplasm. Its function is as follows. Plays a role as a neuroprotective and antiapoptotic factor. The chain is Humanin-like 2 from Homo sapiens (Human).